The sequence spans 158 residues: Ribosome maturation factor RimP (158 aa).

It belongs to the RimP family.

Its subcellular location is the cytoplasm. Required for maturation of 30S ribosomal subunits. This Pseudomonas fluorescens (strain ATCC BAA-477 / NRRL B-23932 / Pf-5) protein is Ribosome maturation factor RimP.